We begin with the raw amino-acid sequence, 202 residues long: Small ribosomal subunit protein uS4c (202 aa).

An S4 RNA-binding domain is found at 90-158 (MRLDNIIFRL…MKRSRDSYEK (69 aa)).

The protein belongs to the universal ribosomal protein uS4 family. As to quaternary structure, part of the 30S ribosomal subunit. Contacts protein S5. The interaction surface between S4 and S5 is involved in control of translational fidelity.

It localises to the plastid. The protein localises to the chloroplast. In terms of biological role, one of the primary rRNA binding proteins, it binds directly to 16S rRNA where it nucleates assembly of the body of the 30S subunit. With S5 and S12 plays an important role in translational accuracy. In Anthoceros angustus (Hornwort), this protein is Small ribosomal subunit protein uS4c (rps4).